A 294-amino-acid polypeptide reads, in one-letter code: Indole-3-glycerol phosphate synthase (294 aa).

It belongs to the TrpC family.

It catalyses the reaction 1-(2-carboxyphenylamino)-1-deoxy-D-ribulose 5-phosphate + H(+) = (1S,2R)-1-C-(indol-3-yl)glycerol 3-phosphate + CO2 + H2O. It participates in amino-acid biosynthesis; L-tryptophan biosynthesis; L-tryptophan from chorismate: step 4/5. This Synechococcus sp. (strain WH7803) protein is Indole-3-glycerol phosphate synthase.